A 367-amino-acid polypeptide reads, in one-letter code: Phosphoribosylformylglycinamidine cyclo-ligase (367 aa).

This sequence belongs to the AIR synthase family.

The protein localises to the cytoplasm. It catalyses the reaction 2-formamido-N(1)-(5-O-phospho-beta-D-ribosyl)acetamidine + ATP = 5-amino-1-(5-phospho-beta-D-ribosyl)imidazole + ADP + phosphate + H(+). The protein operates within purine metabolism; IMP biosynthesis via de novo pathway; 5-amino-1-(5-phospho-D-ribosyl)imidazole from N(2)-formyl-N(1)-(5-phospho-D-ribosyl)glycinamide: step 2/2. The protein is Phosphoribosylformylglycinamidine cyclo-ligase of Cyanothece sp. (strain PCC 7425 / ATCC 29141).